Reading from the N-terminus, the 463-residue chain is Chromosomal replication initiator protein DnaA (463 aa).

Residues 1–83 (MSTNQIILTD…LQLFQHYNNT (83 aa)) are domain I, interacts with DnaA modulators. Residues 83–124 (TIKSIEIITKELPGTTQTVIELPTKTFADIGSSELNSENIFS) are domain II. Residues 125-343 (TLDVRFTFDN…GALNKVIAHS (219 aa)) form a domain III, AAA+ region region. Positions 171, 173, 174, and 175 each coordinate ATP. The tract at residues 344 to 463 (NFTLKEITLE…INLLMKILQN (120 aa)) is domain IV, binds dsDNA.

The protein belongs to the DnaA family. In terms of assembly, oligomerizes as a right-handed, spiral filament on DNA at oriC.

It localises to the cytoplasm. Its function is as follows. Plays an essential role in the initiation and regulation of chromosomal replication. ATP-DnaA binds to the origin of replication (oriC) to initiate formation of the DNA replication initiation complex once per cell cycle. Binds the DnaA box (a 9 base pair repeat at the origin) and separates the double-stranded (ds)DNA. Forms a right-handed helical filament on oriC DNA; dsDNA binds to the exterior of the filament while single-stranded (ss)DNA is stabiized in the filament's interior. The ATP-DnaA-oriC complex binds and stabilizes one strand of the AT-rich DNA unwinding element (DUE), permitting loading of DNA polymerase. After initiation quickly degrades to an ADP-DnaA complex that is not apt for DNA replication. Binds acidic phospholipids. This is Chromosomal replication initiator protein DnaA from Rickettsia felis (strain ATCC VR-1525 / URRWXCal2) (Rickettsia azadi).